The sequence spans 621 residues: MSCYIYQLPSWVLDDLCRNMDTLSEWDWMQFASYVITDLTQLRKIKSMERAQGVSITRELLWWWGMRQATVQQLLDLLCHLELYRAAQIILNWKPVLEVKSSIPDFSDTVKPGKPLAASVRNTEDKQETGQPVRPPTFPGSGPAAVRVNLPAPPEDASSSLKTNQTASADSKDFSASIPKQETLSSLAGDDLFWSEVDVIQATDNFNPSHKISEGTFADVYRGHKRGTPFIFKKLREMACSGPGSVEKFFQAEVQICRRCCHPNVLPLLGCCTGEQFYSLIYPYMANGSLQDRLQGQGGSDPLPWPQRISICSGLLHAVEHLHSLEIIHGNVKSSNVLLDQNFTPKLAHSMAHPCPVNRTSKYTMMKTHLFQASTAYLPEDFIRVGQLTKRVDIFSCGIVLAEVLTGIPAMDNNRNPVYLKDLLLHEIPSSTISLCSRKMGVEKEMAKEICQKYLEKRAGRLPEAHAEALVMAACLCLRRRNASLAEVCSSVAAVEEQLRGQETSLPCSGLSEGTGSSFNTPEETDDVDNSSFDGSYSMRAAPWAGATSSPPLTADEEGMLLAGGAVEADSSAEACAPPEPPQDATETSWKIEINEAKRKLMENILLYKEEKLDSIELFGP.

One can recognise a Death domain in the interval 13-94; that stretch reads LDDLCRNMDT…RAAQIILNWK (82 aa). The segment at 113–175 is disordered; that stretch reads GKPLAASVRN…TASADSKDFS (63 aa). The segment covering 157 to 169 has biased composition (polar residues); that stretch reads ASSSLKTNQTASA. The 271-residue stretch at 206 to 476 folds into the Protein kinase domain; that stretch reads FNPSHKISEG…AEALVMAACL (271 aa). ATP contacts are provided by residues 212–220, Lys-233, and 333–336; these read ISEGTFADV and KSSN. Residues 503 to 522 are compositionally biased toward polar residues; it reads ETSLPCSGLSEGTGSSFNTP. Residues 503 to 534 are disordered; it reads ETSLPCSGLSEGTGSSFNTPEETDDVDNSSFD.

Belongs to the protein kinase superfamily. TKL Ser/Thr protein kinase family. Pelle subfamily. Interacts with MYD88. IL-1 stimulation leads to the formation of a signaling complex which dissociates from the IL-1 receptor following the binding of PELI1.

Its function is as follows. Binds to the IL-1 type I receptor following IL-1 engagement, triggering intracellular signaling cascades leading to transcriptional up-regulation and mRNA stabilization. In Bos taurus (Bovine), this protein is Interleukin-1 receptor-associated kinase-like 2 (IRAK2).